A 1209-amino-acid polypeptide reads, in one-letter code: DNA-directed RNA polymerase subunit beta' (1209 aa).

Zn(2+) is bound by residues Cys-60, Cys-62, Cys-75, and Cys-78. Mg(2+)-binding residues include Asp-450, Asp-452, and Asp-454. Cys-819, Cys-893, Cys-900, and Cys-903 together coordinate Zn(2+).

The protein belongs to the RNA polymerase beta' chain family. In terms of assembly, the RNAP catalytic core consists of 2 alpha, 1 beta, 1 beta' and 1 omega subunit. When a sigma factor is associated with the core the holoenzyme is formed, which can initiate transcription. It depends on Mg(2+) as a cofactor. The cofactor is Zn(2+).

It catalyses the reaction RNA(n) + a ribonucleoside 5'-triphosphate = RNA(n+1) + diphosphate. In terms of biological role, DNA-dependent RNA polymerase catalyzes the transcription of DNA into RNA using the four ribonucleoside triphosphates as substrates. This Streptococcus mutans serotype c (strain ATCC 700610 / UA159) protein is DNA-directed RNA polymerase subunit beta'.